We begin with the raw amino-acid sequence, 444 residues long: Chromosomal replication initiator protein DnaA (444 aa).

The domain I, interacts with DnaA modulators stretch occupies residues 1 to 73 (MDSSAQQLWH…AEVVQDIVGY (73 aa)). The interval 73–104 (YPVEIQLTAQQGDLIAIFQPHTSLESELSPTN) is domain II. The interval 105-321 (QLNPKYNFSR…GALIRATTYI (217 aa)) is domain III, AAA+ region. Residues Gly149, Gly151, Lys152, and Thr153 each contribute to the ATP site. The tract at residues 322–444 (SISGLPMTVE…ERINSLSRNQ (123 aa)) is domain IV, binds dsDNA.

It belongs to the DnaA family. Oligomerizes as a right-handed, spiral filament on DNA at oriC.

The protein localises to the cytoplasm. Functionally, plays an essential role in the initiation and regulation of chromosomal replication. ATP-DnaA binds to the origin of replication (oriC) to initiate formation of the DNA replication initiation complex once per cell cycle. Binds the DnaA box (a 9 base pair repeat at the origin) and separates the double-stranded (ds)DNA. Forms a right-handed helical filament on oriC DNA; dsDNA binds to the exterior of the filament while single-stranded (ss)DNA is stabiized in the filament's interior. The ATP-DnaA-oriC complex binds and stabilizes one strand of the AT-rich DNA unwinding element (DUE), permitting loading of DNA polymerase. After initiation quickly degrades to an ADP-DnaA complex that is not apt for DNA replication. Binds acidic phospholipids. This Microcystis aeruginosa (strain NIES-843 / IAM M-2473) protein is Chromosomal replication initiator protein DnaA.